The chain runs to 143 residues: AP-2 complex subunit sigma (143 aa).

This sequence belongs to the adaptor complexes small subunit family. As to quaternary structure, adaptor protein complex 2 (AP-2) is a heterotetramer composed of two large adaptins (alpha-type subunit APL3 and beta-type subunit APL1), a medium chain (mu-type subunit APM4) and a small adaptin (sigma-type subunit APS2).

It localises to the cell membrane. Its subcellular location is the membrane. The protein localises to the coated pit. Component of the adaptor complexes which link clathrin to receptors in coated vesicles. Clathrin-associated protein complexes are believed to interact with the cytoplasmic tails of membrane proteins, leading to their selection and concentration. The polypeptide is AP-2 complex subunit sigma (aps-2) (Neurospora crassa (strain ATCC 24698 / 74-OR23-1A / CBS 708.71 / DSM 1257 / FGSC 987)).